Consider the following 96-residue polypeptide: Plasminogen-like protein A (96 aa).

Positions Met1–Gly19 are cleaved as a signal peptide. Residues Glu20–Lys96 enclose the PAN domain. Intrachain disulfides connect Cys49–Cys73 and Cys53–Cys61.

In terms of tissue distribution, expressed in liver.

Its subcellular location is the secreted. May bind non-covalently to lysine binding sites present in the kringle structures of plasminogen. This may interfere with the binding of fibrin or alpha-2-antiplasmin to plasminogen and may result in the localization of activity at sites necessary for extracellular matrix destruction. This Homo sapiens (Human) protein is Plasminogen-like protein A (PLGLA).